Reading from the N-terminus, the 367-residue chain is Glutamate 5-kinase (367 aa).

Lysine 10 provides a ligand contact to ATP. Serine 50, aspartate 137, and asparagine 149 together coordinate substrate. Residues 169–170 (TD) and 211–217 (TGGMATK) each bind ATP. Positions 275 to 353 (AGEITVDDGA…QQISEILGYE (79 aa)) constitute a PUA domain.

It belongs to the glutamate 5-kinase family.

The protein localises to the cytoplasm. It catalyses the reaction L-glutamate + ATP = L-glutamyl 5-phosphate + ADP. Its pathway is amino-acid biosynthesis; L-proline biosynthesis; L-glutamate 5-semialdehyde from L-glutamate: step 1/2. Functionally, catalyzes the transfer of a phosphate group to glutamate to form L-glutamate 5-phosphate. The polypeptide is Glutamate 5-kinase (Yersinia pseudotuberculosis serotype IB (strain PB1/+)).